The primary structure comprises 181 residues: NAD(P)H-quinone oxidoreductase subunit 6, chloroplastic (181 aa).

Helical transmembrane passes span 10–30, 33–53, 62–82, 98–118, and 153–173; these read TLLF…VVLL, VIYS…LYLL, AQVL…IMLV, IISA…IFTT, and LFPF…AITI.

The protein belongs to the complex I subunit 6 family. In terms of assembly, NDH is composed of at least 16 different subunits, 5 of which are encoded in the nucleus.

It is found in the plastid. The protein localises to the chloroplast thylakoid membrane. It catalyses the reaction a plastoquinone + NADH + (n+1) H(+)(in) = a plastoquinol + NAD(+) + n H(+)(out). The enzyme catalyses a plastoquinone + NADPH + (n+1) H(+)(in) = a plastoquinol + NADP(+) + n H(+)(out). NDH shuttles electrons from NAD(P)H:plastoquinone, via FMN and iron-sulfur (Fe-S) centers, to quinones in the photosynthetic chain and possibly in a chloroplast respiratory chain. The immediate electron acceptor for the enzyme in this species is believed to be plastoquinone. Couples the redox reaction to proton translocation, and thus conserves the redox energy in a proton gradient. This chain is NAD(P)H-quinone oxidoreductase subunit 6, chloroplastic (ndhG), found in Zygnema circumcarinatum (Green alga).